The primary structure comprises 158 residues: Endoribonuclease YbeY (158 aa).

Zn(2+)-binding residues include His118, His122, and His128.

It belongs to the endoribonuclease YbeY family. Zn(2+) is required as a cofactor.

The protein localises to the cytoplasm. In terms of biological role, single strand-specific metallo-endoribonuclease involved in late-stage 70S ribosome quality control and in maturation of the 3' terminus of the 16S rRNA. The polypeptide is Endoribonuclease YbeY (Bartonella bacilliformis (strain ATCC 35685 / KC583 / Herrer 020/F12,63)).